We begin with the raw amino-acid sequence, 385 residues long: POU domain, class 3, transcription factor 2-B (385 aa).

3 disordered regions span residues 106 to 136 (LVHP…SSNG), 149 to 209 (NGMI…TPTS), and 351 to 385 (EKRM…TSVQ). The segment covering 122-136 (STGSTHLSSMASSNG) has biased composition (polar residues). The span at 165–178 (LRDSHDDHHGDHGH) shows a compositional bias: basic and acidic residues. The span at 179–196 (QQPSQTQQQQQQHSQLQG) shows a compositional bias: low complexity. The POU-specific domain occupies 204-278 (EDTPTSDDLE…LLNKWLEEAD (75 aa)). A DNA-binding region (homeobox) is located at residues 296-355 (KRKKRTSIEVSVKGALESHFLKCPKPAAQEITSLADSLQLEKEVVRVWFCNRRQKEKRMT).

It belongs to the POU transcription factor family. Class-3 subfamily. In terms of tissue distribution, expressed in the developing brain and spinal cord. Also found in a restricted region of the auditory vesicle during development. In the adult, expression is restricted to the brain.

It is found in the nucleus. Its function is as follows. Transcription factor that may be implicated in patterning of the central nervous system during early development. The sequence is that of POU domain, class 3, transcription factor 2-B (pou3f2-b) from Xenopus laevis (African clawed frog).